Reading from the N-terminus, the 360-residue chain is Photosystem II protein D1 (360 aa).

The next 3 membrane-spanning stretches (helical) occupy residues 29 to 46 (YIGW…TAAS), 118 to 133 (HFLI…EWEL), and 142 to 156 (WIFV…AASA). His118 contacts chlorophyll a. Trp126 is a binding site for pheophytin a. 2 residues coordinate [CaMn4O5] cluster: Asp170 and Glu189. Residues 197-218 (FHMAGVAGVFGGSLFSAMHGSL) form a helical membrane-spanning segment. His198 is a chlorophyll a binding site. A quinone-binding positions include His215 and 264-265 (SF). His215 contributes to the Fe cation binding site. His272 serves as a coordination point for Fe cation. A helical transmembrane segment spans residues 274–288 (FLAAWPVVGIWLTAL). Residues His332, Glu333, Asp342, and Ala344 each coordinate [CaMn4O5] cluster. Positions 345–360 (SNEILPVAISAPSVVG) are excised as a propeptide.

This sequence belongs to the reaction center PufL/M/PsbA/D family. In terms of assembly, PSII is composed of 1 copy each of membrane proteins PsbA, PsbB, PsbC, PsbD, PsbE, PsbF, PsbH, PsbI, PsbJ, PsbK, PsbL, PsbM, PsbT, PsbX, PsbY, PsbZ, Psb30/Ycf12, at least 3 peripheral proteins of the oxygen-evolving complex and a large number of cofactors. It forms dimeric complexes. The D1/D2 heterodimer binds P680, chlorophylls that are the primary electron donor of PSII, and subsequent electron acceptors. It shares a non-heme iron and each subunit binds pheophytin, quinone, additional chlorophylls, carotenoids and lipids. D1 provides most of the ligands for the Mn4-Ca-O5 cluster of the oxygen-evolving complex (OEC). There is also a Cl(-1) ion associated with D1 and D2, which is required for oxygen evolution. The PSII complex binds additional chlorophylls, carotenoids and specific lipids. serves as cofactor. In terms of processing, tyr-161 forms a radical intermediate that is referred to as redox-active TyrZ, YZ or Y-Z. Post-translationally, C-terminally processed by CTPA; processing is essential to allow assembly of the oxygen-evolving complex and thus photosynthetic growth.

Its subcellular location is the plastid. It localises to the chloroplast thylakoid membrane. The catalysed reaction is 2 a plastoquinone + 4 hnu + 2 H2O = 2 a plastoquinol + O2. Functionally, photosystem II (PSII) is a light-driven water:plastoquinone oxidoreductase that uses light energy to abstract electrons from H(2)O, generating O(2) and a proton gradient subsequently used for ATP formation. It consists of a core antenna complex that captures photons, and an electron transfer chain that converts photonic excitation into a charge separation. The D1/D2 (PsbA/PsbD) reaction center heterodimer binds P680, the primary electron donor of PSII as well as several subsequent electron acceptors. The polypeptide is Photosystem II protein D1 (Ectocarpus siliculosus (Brown alga)).